The sequence spans 405 residues: Adenylosuccinate synthetase (405 aa).

Residues G12–K18 and G40–T42 each bind GTP. D13 functions as the Proton acceptor in the catalytic mechanism. Mg(2+) contacts are provided by D13 and G40. IMP is bound by residues D13–K16, N38–H41, T121, R135, Q213, T228, and R297. Catalysis depends on H41, which acts as the Proton donor. T293–R299 is a binding site for substrate. GTP is bound by residues R299, K325–D327, and S390–G392.

The protein belongs to the adenylosuccinate synthetase family. As to quaternary structure, homodimer. It depends on Mg(2+) as a cofactor.

It is found in the cytoplasm. It carries out the reaction IMP + L-aspartate + GTP = N(6)-(1,2-dicarboxyethyl)-AMP + GDP + phosphate + 2 H(+). Its pathway is purine metabolism; AMP biosynthesis via de novo pathway; AMP from IMP: step 1/2. Functionally, plays an important role in the de novo pathway of purine nucleotide biosynthesis. Catalyzes the first committed step in the biosynthesis of AMP from IMP. The sequence is that of Adenylosuccinate synthetase from Deinococcus radiodurans (strain ATCC 13939 / DSM 20539 / JCM 16871 / CCUG 27074 / LMG 4051 / NBRC 15346 / NCIMB 9279 / VKM B-1422 / R1).